The sequence spans 83 residues: Small ribosomal subunit protein bS18A (83 aa).

The protein belongs to the bacterial ribosomal protein bS18 family. As to quaternary structure, part of the 30S ribosomal subunit. Forms a tight heterodimer with protein bS6.

In terms of biological role, binds as a heterodimer with protein bS6 to the central domain of the 16S rRNA, where it helps stabilize the platform of the 30S subunit. The sequence is that of Small ribosomal subunit protein bS18A from Mycolicibacterium vanbaalenii (strain DSM 7251 / JCM 13017 / BCRC 16820 / KCTC 9966 / NRRL B-24157 / PYR-1) (Mycobacterium vanbaalenii).